The primary structure comprises 106 residues: Toxin-like structure LSTX-D4 (106 aa).

The signal sequence occupies residues 1–20 (MMKVLVVVALLVTLISYSSS). Positions 21–41 (EGIGDLEADELLSLMANEQTR) are excised as a propeptide. 4 disulfides stabilise this stretch: Cys-45–Cys-60, Cys-52–Cys-69, Cys-59–Cys-85, and Cys-71–Cys-83.

Belongs to the neurotoxin 19 (CSTX) family. 02 (D7) subfamily. In terms of tissue distribution, expressed by the venom gland.

The protein resides in the secreted. The polypeptide is Toxin-like structure LSTX-D4 (Lycosa singoriensis (Wolf spider)).